A 474-amino-acid polypeptide reads, in one-letter code: Trehalose-6-phosphate synthase (474 aa).

A D-glucose 6-phosphate-binding site is contributed by R10. 22–23 (GG) contributes to the UDP-alpha-D-glucose binding site. D-glucose 6-phosphate is bound by residues Y77 and D131. Positions 263 and 268 each coordinate UDP-alpha-D-glucose. R301 is a D-glucose 6-phosphate binding site. Residues F340 and 366 to 370 (LVAKE) contribute to the UDP-alpha-D-glucose site.

Belongs to the glycosyltransferase 20 family. As to quaternary structure, homotetramer.

The catalysed reaction is D-glucose 6-phosphate + UDP-alpha-D-glucose = alpha,alpha-trehalose 6-phosphate + UDP + H(+). It functions in the pathway glycan biosynthesis; trehalose biosynthesis. In terms of biological role, probably involved in the osmoprotection via the biosynthesis of trehalose. Catalyzes the transfer of glucose from UDP-alpha-D-glucose (UDP-Glc) to D-glucose 6-phosphate (Glc-6-P) to form trehalose-6-phosphate. Acts with retention of the anomeric configuration of the UDP-sugar donor. The polypeptide is Trehalose-6-phosphate synthase (Klebsiella pneumoniae subsp. pneumoniae (strain ATCC 700721 / MGH 78578)).